Consider the following 121-residue polypeptide: Small ribosomal subunit protein uS13 (121 aa).

The segment at 93–121 (RNLPVRGQRTRTNARTCKGPRKSMNKQFK) is disordered. Over residues 110 to 121 (KGPRKSMNKQFK) the composition is skewed to basic residues.

The protein belongs to the universal ribosomal protein uS13 family. Part of the 30S ribosomal subunit. Forms a loose heterodimer with protein S19. Forms two bridges to the 50S subunit in the 70S ribosome.

Its function is as follows. Located at the top of the head of the 30S subunit, it contacts several helices of the 16S rRNA. In the 70S ribosome it contacts the 23S rRNA (bridge B1a) and protein L5 of the 50S subunit (bridge B1b), connecting the 2 subunits; these bridges are implicated in subunit movement. Contacts the tRNAs in the A and P-sites. The chain is Small ribosomal subunit protein uS13 from Blochmanniella pennsylvanica (strain BPEN).